The chain runs to 66 residues: MKKDIHPEYVECTVTCACGNTFTSKSNKSEIRVDICSECHPFFTGSEKIVDSAGRVDKFKKKYNMK.

4 residues coordinate Zn(2+): cysteine 16, cysteine 18, cysteine 36, and cysteine 39.

Belongs to the bacterial ribosomal protein bL31 family. Type A subfamily. As to quaternary structure, part of the 50S ribosomal subunit. Zn(2+) is required as a cofactor.

In terms of biological role, binds the 23S rRNA. The protein is Large ribosomal subunit protein bL31 of Campylobacter fetus subsp. fetus (strain 82-40).